An 813-amino-acid polypeptide reads, in one-letter code: Protein translocase subunit SecA 2 (813 aa).

ATP is bound by residues Q105, 123 to 127 (GEGKT), and D525.

Belongs to the SecA family. As to quaternary structure, monomer and homodimer. Part of the essential Sec protein translocation apparatus which comprises SecA, SecYEG and auxiliary proteins SecDF-YajC and YidC.

Its subcellular location is the cell inner membrane. It is found in the cytoplasm. The enzyme catalyses ATP + H2O + cellular proteinSide 1 = ADP + phosphate + cellular proteinSide 2.. In terms of biological role, part of the Sec protein translocase complex. Interacts with the SecYEG preprotein conducting channel. Has a central role in coupling the hydrolysis of ATP to the transfer of proteins into and across the cell membrane, serving both as a receptor for the preprotein-SecB complex and as an ATP-driven molecular motor driving the stepwise translocation of polypeptide chains across the membrane. This is Protein translocase subunit SecA 2 from Rhodopseudomonas palustris (strain BisA53).